A 199-amino-acid chain; its full sequence is MSFYPPSLVNLIKQLSKLPGIGEKTAERLALHILRGSVKDAQALAESISEAKETVRLCSVCYGLADSDPCHICRDATRDQDVVCVVEQGTDMVALEKSGAFKGRYHVLQGCLSPMNGVGPDNLRIRELVERLKKEKIKEVVVATGTSVEGESTANYLRQVLEGSGVKITRIASGVPIGGDLKYTDALTLKRALDSRHCL.

The C4-type zinc-finger motif lies at 58 to 73 (CSVCYGLADSDPCHIC). The 96-residue stretch at 81 to 176 (DVVCVVEQGT…KITRIASGVP (96 aa)) folds into the Toprim domain.

The protein belongs to the RecR family.

Its function is as follows. May play a role in DNA repair. It seems to be involved in an RecBC-independent recombinational process of DNA repair. It may act with RecF and RecO. This chain is Recombination protein RecR, found in Desulfatibacillum aliphaticivorans.